The primary structure comprises 229 residues: Large ribosomal subunit protein uL1 (229 aa).

The protein belongs to the universal ribosomal protein uL1 family. Part of the 50S ribosomal subunit.

Binds directly to 23S rRNA. The L1 stalk is quite mobile in the ribosome, and is involved in E site tRNA release. Its function is as follows. Protein L1 is also a translational repressor protein, it controls the translation of the L11 operon by binding to its mRNA. This chain is Large ribosomal subunit protein uL1, found in Lactococcus lactis subsp. cremoris (strain MG1363).